We begin with the raw amino-acid sequence, 519 residues long: Histidine--tRNA ligase (519 aa).

Belongs to the class-II aminoacyl-tRNA synthetase family. As to quaternary structure, homodimer.

It is found in the cytoplasm. The enzyme catalyses tRNA(His) + L-histidine + ATP = L-histidyl-tRNA(His) + AMP + diphosphate + H(+). The protein is Histidine--tRNA ligase of Rhodopseudomonas palustris (strain BisB18).